A 693-amino-acid chain; its full sequence is UvrABC system protein B (693 aa).

A Helicase ATP-binding domain is found at 35–188 (ERIKNGEKDV…DDLLRKFVSM (154 aa)). 48–55 (GATGTGKS) is a binding site for ATP. A Beta-hairpin motif is present at residues 101–124 (YYDYYQPEAYVAQTDTFIEKDSSV). One can recognise a Helicase C-terminal domain in the interval 438 to 604 (QIDDLLGEIK…PLRKKIADIT (167 aa)). Positions 648–683 (VGLIEQLTEQMHAAAGELQFELAARLRDEVGELKKE) constitute a UVR domain.

This sequence belongs to the UvrB family. As to quaternary structure, forms a heterotetramer with UvrA during the search for lesions. Interacts with UvrC in an incision complex.

It localises to the cytoplasm. In terms of biological role, the UvrABC repair system catalyzes the recognition and processing of DNA lesions. A damage recognition complex composed of 2 UvrA and 2 UvrB subunits scans DNA for abnormalities. Upon binding of the UvrA(2)B(2) complex to a putative damaged site, the DNA wraps around one UvrB monomer. DNA wrap is dependent on ATP binding by UvrB and probably causes local melting of the DNA helix, facilitating insertion of UvrB beta-hairpin between the DNA strands. Then UvrB probes one DNA strand for the presence of a lesion. If a lesion is found the UvrA subunits dissociate and the UvrB-DNA preincision complex is formed. This complex is subsequently bound by UvrC and the second UvrB is released. If no lesion is found, the DNA wraps around the other UvrB subunit that will check the other stand for damage. The polypeptide is UvrABC system protein B (Arthrobacter sp. (strain FB24)).